A 156-amino-acid chain; its full sequence is Small ribosomal subunit protein uS7 (156 aa).

The protein belongs to the universal ribosomal protein uS7 family. As to quaternary structure, part of the 30S ribosomal subunit. Contacts proteins S9 and S11.

In terms of biological role, one of the primary rRNA binding proteins, it binds directly to 16S rRNA where it nucleates assembly of the head domain of the 30S subunit. Is located at the subunit interface close to the decoding center, probably blocks exit of the E-site tRNA. This chain is Small ribosomal subunit protein uS7, found in Proteus mirabilis (strain HI4320).